The sequence spans 481 residues: Alpha-L-arabinofuranosidase 43 (481 aa).

The signal sequence occupies residues 1 to 19; the sequence is MRFSVFTAAIAAAFSACCA. N-linked (GlcNAc...) asparagine glycosylation is found at asparagine 158, asparagine 176, and asparagine 365.

Belongs to the glycosyl hydrolase 43 family.

Its subcellular location is the secreted. The enzyme catalyses Hydrolysis of terminal non-reducing alpha-L-arabinofuranoside residues in alpha-L-arabinosides.. With respect to regulation, activity is significantly inhibited by SDS and partially inhibited by Ag(+), Fe(3+) and beta-mercaptoethanol. Functionally, alpha-L-arabinofuranosidase specific for the cleavage of alpha-1,3-linkage. Shows high activity against 4-nitrophenyl alpha-L-arabinofuranoside, debranched arabinan, and sugar beet arabinan. This Humicola insolens (Soft-rot fungus) protein is Alpha-L-arabinofuranosidase 43.